Consider the following 234-residue polypeptide: Interleukin-34 (234 aa).

The signal sequence occupies residues 1–20 (MPQGLAWLRYLGILLGMALG). An N-linked (GlcNAc...) asparagine glycan is attached at N76. A disordered region spans residues 191-234 (EAPQPQPRSPASAQCEAAQLYPLPQPPSTSLPRVLGPSAGPPTQ).

This sequence belongs to the IL-34 family. As to quaternary structure, homodimer. Interacts with CSF1R.

Its subcellular location is the secreted. In terms of biological role, cytokine that promotes the proliferation, survival and differentiation of monocytes and macrophages. Promotes the release of pro-inflammatory chemokines, and thereby plays an important role in innate immunity and in inflammatory processes. Plays an important role in the regulation of osteoclast proliferation and differentiation, and in the regulation of bone resorption. Signaling via CSF1R and its downstream effectors stimulates phosphorylation of MAPK1/ERK2 AND MAPK3/ERK1. The polypeptide is Interleukin-34 (Bos taurus (Bovine)).